A 194-amino-acid chain; its full sequence is MSETLVLHLKVPTERFREVLSSLKEKQNFTASPSSQPKPQERPFQMKKPRAPYGMGPRAMKRREKAEKEKLGVVNDELAESSKPSSGAATPTRSAPKSSAGLINSGLRALDRSGKPCRRWEKKPISIRSISTIVWKLPLWIGTPDSIPNTPELPVKTTLDSVNEIAAALSTHAESSPMDATSPVDSMPESATGI.

Disordered regions lie at residues 24–107 and 170–194; these read KEKQ…NSGL and STHAESSPMDATSPVDSMPESATGI. Polar residues-rich tracts occupy residues 28–38 and 82–97; these read NFTASPSSQPK and SKPSSGAATPTRSAPK. Position 86 is a phosphoserine (Ser-86). Position 90 is a phosphothreonine (Thr-90).

As to quaternary structure, component of the INO80 chromatin remodeling complex.

It localises to the cytoplasm. It is found in the nucleus. Its function is as follows. Component of the INO80 complex which remodels chromatin by shifting nucleosomes and is involved in DNA repair. In Schizosaccharomyces pombe (strain 972 / ATCC 24843) (Fission yeast), this protein is INO80 complex subunit 4 (ies4).